The chain runs to 943 residues: Isoleucine--tRNA ligase (943 aa).

The 'HIGH' region motif lies at 58–68; that stretch reads PYANGSIHIGH. Position 567 (glutamate 567) interacts with L-isoleucyl-5'-AMP. The 'KMSKS' region motif lies at 608-612; that stretch reads KMSKS. Lysine 611 contacts ATP. Residues cysteine 906, cysteine 909, cysteine 926, and cysteine 929 each contribute to the Zn(2+) site.

It belongs to the class-I aminoacyl-tRNA synthetase family. IleS type 1 subfamily. In terms of assembly, monomer. Zn(2+) is required as a cofactor.

It localises to the cytoplasm. The enzyme catalyses tRNA(Ile) + L-isoleucine + ATP = L-isoleucyl-tRNA(Ile) + AMP + diphosphate. Its function is as follows. Catalyzes the attachment of isoleucine to tRNA(Ile). As IleRS can inadvertently accommodate and process structurally similar amino acids such as valine, to avoid such errors it has two additional distinct tRNA(Ile)-dependent editing activities. One activity is designated as 'pretransfer' editing and involves the hydrolysis of activated Val-AMP. The other activity is designated 'posttransfer' editing and involves deacylation of mischarged Val-tRNA(Ile). This chain is Isoleucine--tRNA ligase, found in Pseudomonas fluorescens (strain ATCC BAA-477 / NRRL B-23932 / Pf-5).